An 83-amino-acid chain; its full sequence is Small integral membrane protein 22 (83 aa).

A helical membrane pass occupies residues 32 to 52 (VAFIVFLTFMGTVLLLLLLVV). The interval 60–83 (SPGPRRESPRKERPKGVDNLALEP) is disordered. Residues 63–75 (PRRESPRKERPKG) are compositionally biased toward basic and acidic residues.

As to quaternary structure, interacts with CANX and DDOST. Interacts with SQLE; this interaction modulates lipid droplet formation.

The protein localises to the membrane. The protein resides in the late endosome. Functionally, may modulate lipid droplet formation throught interaction with SQLE. The protein is Small integral membrane protein 22 of Homo sapiens (Human).